We begin with the raw amino-acid sequence, 394 residues long: Probable dual specificity protein phosphatase DDB_G0281963 (394 aa).

Positions 2-142 (NDVSRIFPGF…LKKYELILKK (141 aa)) constitute a Tyrosine-protein phosphatase domain. The active-site Phosphocysteine intermediate is the Cys86. The segment at 147 to 191 (PQIVEKESEEEDDDEDDDDDDYDSDEDDDDDSEDDDFEEEFDNVV) is disordered. A compositionally biased stretch (acidic residues) spans 153 to 188 (ESEEEDDDEDDDDDDYDSDEDDDDDSEDDDFEEEFD).

Belongs to the protein-tyrosine phosphatase family. Non-receptor class dual specificity subfamily.

It catalyses the reaction O-phospho-L-tyrosyl-[protein] + H2O = L-tyrosyl-[protein] + phosphate. It carries out the reaction O-phospho-L-seryl-[protein] + H2O = L-seryl-[protein] + phosphate. The catalysed reaction is O-phospho-L-threonyl-[protein] + H2O = L-threonyl-[protein] + phosphate. Its function is as follows. Has a dual specificity toward Ser/Thr and Tyr-containing proteins. The sequence is that of Probable dual specificity protein phosphatase DDB_G0281963 from Dictyostelium discoideum (Social amoeba).